The chain runs to 259 residues: Global transcriptional regulator CodY (259 aa).

The tract at residues 1–155 (MTLLEKTRKI…GGTVVGMEIL (155 aa)) is GAF domain. Positions 203–222 (ASKIADRVGITRSVIVNALR) form a DNA-binding region, H-T-H motif.

Belongs to the CodY family.

The protein localises to the cytoplasm. In terms of biological role, DNA-binding global transcriptional regulator which is involved in the adaptive response to starvation and acts by directly or indirectly controlling the expression of numerous genes in response to nutrient availability. During rapid exponential growth, CodY is highly active and represses genes whose products allow adaptation to nutrient depletion. The chain is Global transcriptional regulator CodY from Listeria welshimeri serovar 6b (strain ATCC 35897 / DSM 20650 / CCUG 15529 / CIP 8149 / NCTC 11857 / SLCC 5334 / V8).